A 414-amino-acid polypeptide reads, in one-letter code: tRNA(Ile)-lysidine synthase (414 aa).

17–22 (SGGCDS) serves as a coordination point for ATP.

This sequence belongs to the tRNA(Ile)-lysidine synthase family.

It localises to the cytoplasm. It carries out the reaction cytidine(34) in tRNA(Ile2) + L-lysine + ATP = lysidine(34) in tRNA(Ile2) + AMP + diphosphate + H(+). Ligates lysine onto the cytidine present at position 34 of the AUA codon-specific tRNA(Ile) that contains the anticodon CAU, in an ATP-dependent manner. Cytidine is converted to lysidine, thus changing the amino acid specificity of the tRNA from methionine to isoleucine. In Exiguobacterium sibiricum (strain DSM 17290 / CCUG 55495 / CIP 109462 / JCM 13490 / 255-15), this protein is tRNA(Ile)-lysidine synthase.